The chain runs to 87 residues: Small ribosomal subunit protein uS19 (87 aa).

Belongs to the universal ribosomal protein uS19 family.

Protein S19 forms a complex with S13 that binds strongly to the 16S ribosomal RNA. The chain is Small ribosomal subunit protein uS19 (rpsS) from Mycoplasma pneumoniae (strain ATCC 29342 / M129 / Subtype 1) (Mycoplasmoides pneumoniae).